Consider the following 450-residue polypeptide: Keratin, type I cytoskeletal 25 (450 aa).

Positions 1 to 23 are enriched in low complexity; the sequence is MSLRLSSASRRSCPRPTTGSLRL. Residues 1–26 form a disordered region; it reads MSLRLSSASRRSCPRPTTGSLRLSGG. The interval 1-78 is head; it reads MSLRLSSASR…VNERGLLSGN (78 aa). The interval 79 to 114 is coil 1A; the sequence is EKVTMQNLNDRLASYLDSVHALEEANADLEQKIKGW. Residues 79-394 enclose the IF rod domain; sequence EKVTMQNLND…LLIGGDDGAC (316 aa). A linker 1 region spans residues 115–136; that stretch reads YEKFGPGSCRGLDHDYSRYFPI. The interval 137 to 228 is coil 1B; sequence IDDLKNQIIA…KNHKEEMQVL (92 aa). Positions 229-251 are linker 12; that stretch reads QCAAGGNVNVEMNAAPGVDLTVL. Residues 252-390 are coil 2; it reads LNNMRAEYEA…ETYCLLIGGD (139 aa). Residues 391-450 are tail; sequence DGACKSGGYKSKDYGSGNVGSQVKDSAKAIVVKKVLEEVDQRSKILTTRLRSLEEKSQSN. Ser-442 bears the Phosphoserine mark.

This sequence belongs to the intermediate filament family. As to quaternary structure, heterodimer of a type I and a type II keratin. Heterodimer with type II keratin KRT5 leading to the formation of keratin intermediate filament (KIF) network. Interacts with KRT6A to form filaments.

It localises to the cytoplasm. Essential for the proper assembly of type I and type II keratin protein complexes and formation of keratin intermediate filaments in the inner root sheath (irs). Plays a role in the cytoskeleton organization. The sequence is that of Keratin, type I cytoskeletal 25 (KRT25) from Pan troglodytes (Chimpanzee).